The primary structure comprises 260 residues: Ditrans,polycis-undecaprenyl-diphosphate synthase ((2E,6E)-farnesyl-diphosphate specific) (260 aa).

The active site involves Asp20. Asp20 is a binding site for Mg(2+). Residues Gly21–Arg24, Trp25, Arg33, His37, and Ser65–Glu67 contribute to the substrate site. The Proton acceptor role is filled by Asn68. Substrate contacts are provided by Trp69, Arg71, and Arg188. A Mg(2+)-binding site is contributed by His193. Arg194–Ser196 provides a ligand contact to substrate. A Mg(2+)-binding site is contributed by Glu207.

It belongs to the UPP synthase family. As to quaternary structure, homodimer. Mg(2+) serves as cofactor.

The enzyme catalyses 8 isopentenyl diphosphate + (2E,6E)-farnesyl diphosphate = di-trans,octa-cis-undecaprenyl diphosphate + 8 diphosphate. Functionally, catalyzes the sequential condensation of isopentenyl diphosphate (IPP) with (2E,6E)-farnesyl diphosphate (E,E-FPP) to yield (2Z,6Z,10Z,14Z,18Z,22Z,26Z,30Z,34E,38E)-undecaprenyl diphosphate (di-trans,octa-cis-UPP). UPP is the precursor of glycosyl carrier lipid in the biosynthesis of bacterial cell wall polysaccharide components such as peptidoglycan and lipopolysaccharide. The polypeptide is Ditrans,polycis-undecaprenyl-diphosphate synthase ((2E,6E)-farnesyl-diphosphate specific) (Wigglesworthia glossinidia brevipalpis).